The primary structure comprises 156 residues: Small ribosomal subunit protein bS16 (156 aa).

A compositionally biased stretch (basic and acidic residues) spans Gly-85–Glu-120. A disordered region spans residues Gly-85–Glu-156. Acidic residues predominate over residues Pro-132 to Glu-150.

The protein belongs to the bacterial ribosomal protein bS16 family.

This is Small ribosomal subunit protein bS16 from Micrococcus luteus (strain ATCC 4698 / DSM 20030 / JCM 1464 / CCM 169 / CCUG 5858 / IAM 1056 / NBRC 3333 / NCIMB 9278 / NCTC 2665 / VKM Ac-2230) (Micrococcus lysodeikticus).